Reading from the N-terminus, the 79-residue chain is Conotoxin Leo-O1 (79 aa).

The first 22 residues, 1-22 (MKLTCMMLVAVLFLTAWTFVTA), serve as a signal peptide directing secretion. Positions 23–51 (NVSRNGLENLFPEERHEMMNPEAAKLNNR) are excised as a propeptide. Cystine bridges form between cysteine 53–cysteine 70, cysteine 60–cysteine 74, and cysteine 69–cysteine 78.

This sequence belongs to the conotoxin O1 superfamily. Expressed by the venom duct.

It is found in the secreted. In Conus leopardus (Leopard cone), this protein is Conotoxin Leo-O1.